The primary structure comprises 250 residues: UPF0736 protein BLi01230/BL03322 (250 aa).

It belongs to the UPF0736 family.

In Bacillus licheniformis (strain ATCC 14580 / DSM 13 / JCM 2505 / CCUG 7422 / NBRC 12200 / NCIMB 9375 / NCTC 10341 / NRRL NRS-1264 / Gibson 46), this protein is UPF0736 protein BLi01230/BL03322.